Consider the following 428-residue polypeptide: MAQAVVPAMQCQVGAVRARPAAAAAAAGGRVWGVRRTGRGTSGFRVMAVSTETTGVVTRMEQLLNMDTTPFTDKIIAEYIWVGGTGIDLRSKSRTISKPVEDPSELPKWNYDGSSTGQAPGEDSEVILYPQAIFKDPFRGGNNILVMCDTYTPAGEPIPTNKRNRAAQVFSDPKVVSQVPWFGIEQEYTLLQRDVNWPLGWPVGGYPGPQGPYYCAVGSDKSFGRDISDAHYKACLYAGINISGTNGEVMPGQWEYQVGPSVGIEAGDHIWISRYILERITEQAGVVLTLDPKPIQGDWNGAGCHTNYSTKSMREDGGFEVIKKAILNLSLRHDLHISAYGEGNERRLTGLHETASIDNFSWGVANRGCSIRVGRDTEAKGKGYLEDRRPASNMDPYVVTALLAETTILWEPTLEAEVLAAKKLALKV.

A chloroplast-targeting transit peptide spans 1-48; that stretch reads MAQAVVPAMQCQVGAVRARPAAAAAAAGGRVWGVRRTGRGTSGFRVMA. The 81-residue stretch at 75 to 155 folds into the GS beta-grasp domain; it reads IIAEYIWVGG…VMCDTYTPAG (81 aa). Positions 95–120 are disordered; it reads TISKPVEDPSELPKWNYDGSSTGQAP. In terms of domain architecture, GS catalytic spans 159–428; that stretch reads PTNKRNRAAQ…LAAKKLALKV (270 aa).

Belongs to the glutamine synthetase family. In terms of assembly, homooctamer.

The protein resides in the plastid. The protein localises to the chloroplast. It catalyses the reaction L-glutamate + NH4(+) + ATP = L-glutamine + ADP + phosphate + H(+). Light-modulated chloroplastic glutamine synthetase, encoded by a nuclear gene and expressed primarily in leaves, and which is responsible for the reassimilation of the ammonia generated by photorespiration. In Oryza sativa subsp. japonica (Rice), this protein is Glutamine synthetase, chloroplastic.